The primary structure comprises 144 residues: UPF0225 protein RSc0270 (144 aa).

It belongs to the UPF0225 family.

The chain is UPF0225 protein RSc0270 from Ralstonia nicotianae (strain ATCC BAA-1114 / GMI1000) (Ralstonia solanacearum).